We begin with the raw amino-acid sequence, 397 residues long: MDFNAGVPMSSLSPLMNQDAMWQMNLSSDETMETGSYPERPGEPDCSYYIRTGLCRFGSTCRFNHPRDRELVIATARMRGEYPERIGQPECEYYLKTGTCKFGVTCKFHHPRNKAGIAGRVSLNMLGYPLRSNEVDCAYFLRTGHCKFGGTCKFNHPQPQPTNMMVPTSGQQSYPWSRASFIASPRWQDPSSYASLIMPQGVVPVQGWNPYSGQLGSVSPSGTGNDQNYRNLQQNETIESGSQSQGSFSGYNPGSSVPLGGYYALPRENVFPERPGQPECQFYMKTGDCKFGTVCKFHHPRDRQAPPPDCLLSSIGLPLRPGEPLCVFYTRYGICKFGPSCKFDHPMRVFTYDNTASETDEVVETSTGKSRRLSVSETRQAATTSSGKDTTIDNTQQ.

5 C3H1-type zinc fingers span residues 40-68 (RPGE…HPRD), 85-113 (RIGQ…HPRN), 131-159 (RSNE…HPQP), 274-302 (RPGQ…HPRD), and 320-348 (RPGE…HPMR). A disordered region spans residues 361–397 (EVVETSTGKSRRLSVSETRQAATTSSGKDTTIDNTQQ). The span at 364–397 (ETSTGKSRRLSVSETRQAATTSSGKDTTIDNTQQ) shows a compositional bias: polar residues.

The protein localises to the nucleus. This is Zinc finger CCCH domain-containing protein 33 (ZFN1) from Arabidopsis thaliana (Mouse-ear cress).